Reading from the N-terminus, the 447-residue chain is MREIVHLQTGQCGNQIGAAFWQTISGEHGLDGSGVYNGTSDLQLERMNVYFNEASGNKYVPRAVLVDLEPGTMDAVRAGPFGQLFRPDNFVFGQSGAGNNWAKGHYTEGAELVDQVLDVVRREAEGCDCLQGFQITHSLGGGTGAGMGTLLISKIREEFPDRMMATFSVMPSPKVSDTVVEPYNATLSVHQLVENSDETFCIDNEALYDICMRTLKLNNPSYGDLNHLVSAVMSGVTTCLRFPGQLNSDLRKLAVNMVPFPRLHFFMVGFAPLTSRGAHSFRAVTVPELTQQIFDPKNMMAASDFRNGRYLTCSAIYRGKVSMKEVEDQIRNVQNKNTAYFVEWIPNNVQTALCSIPPRGLKMSSTFVGNSTSIQELFKRVGDQFTAMFRRKAFLHWYTGEGMDEMEFTEAESNMNDLVSEYQQYQEASVSEGEEEYDEEAPLEGEE.

GTP-binding residues include glutamine 11, glutamate 69, serine 138, glycine 142, threonine 143, glycine 144, asparagine 204, and asparagine 226. Glutamate 69 lines the Mg(2+) pocket. Positions 424 to 447 (QYQEASVSEGEEEYDEEAPLEGEE) are disordered. The segment covering 432–447 (EGEEEYDEEAPLEGEE) has biased composition (acidic residues).

The protein belongs to the tubulin family. Dimer of alpha and beta chains. A typical microtubule is a hollow water-filled tube with an outer diameter of 25 nm and an inner diameter of 15 nM. Alpha-beta heterodimers associate head-to-tail to form protofilaments running lengthwise along the microtubule wall with the beta-tubulin subunit facing the microtubule plus end conferring a structural polarity. Microtubules usually have 13 protofilaments but different protofilament numbers can be found in some organisms and specialized cells. Mg(2+) is required as a cofactor.

Its subcellular location is the cytoplasm. It is found in the cytoskeleton. Tubulin is the major constituent of microtubules, a cylinder consisting of laterally associated linear protofilaments composed of alpha- and beta-tubulin heterodimers. Microtubules grow by the addition of GTP-tubulin dimers to the microtubule end, where a stabilizing cap forms. Below the cap, tubulin dimers are in GDP-bound state, owing to GTPase activity of alpha-tubulin. The chain is Tubulin beta chain (TUB1) from Dothistroma septosporum (Red band needle blight fungus).